A 2200-amino-acid polypeptide reads, in one-letter code: Non-reducing polyketide synthase tpeB (2200 aa).

In terms of domain architecture, Starter acyltransferase (SAT) spans 16–255 (FFGDQTVDTL…MDLPLGTPAH (240 aa)). A Ketosynthase family 3 (KS3) domain is found at 382-815 (SNMIAIVGQS…GGNNCVLLEE (434 aa)). Catalysis depends on for beta-ketoacyl synthase activity residues C554, H690, and H729. The Malonyl-CoA:ACP transacylase (MAT) domain maps to 914-1202 (VFAFTGQGSQ…VLNSFIKATL (289 aa)). Residues 1296–1621 (TASLQRVREE…TKRILTTILG (326 aa)) form a product template (PT) domain region. The segment at 1300 to 1433 (QRVREERIQG…CKIRFESKAD (134 aa)) is N-terminal hotdog fold. The PKS/mFAS DH domain occupies 1300 to 1617 (QRVREERIQG…FQRLTKRILT (318 aa)). Catalysis depends on H1332, which acts as the Proton acceptor; for dehydratase activity. The C-terminal hotdog fold stretch occupies residues 1462–1617 (NGHKLPKPVV…FQRLTKRILT (156 aa)). Residue D1522 is the Proton donor; for dehydratase activity of the active site. A disordered region spans residues 1625–1652 (DHHNSNEVRNGNATTTHTNPPAHATTQS). A compositionally biased stretch (low complexity) spans 1636-1650 (NATTTHTNPPAHATT). 2 Carrier domains span residues 1671–1748 (TVGE…AELP) and 1791–1865 (ANYA…GPNT). An O-(pantetheine 4'-phosphoryl)serine mark is found at S1708 and S1825. The interval 1931 to 2173 (MFFLPDGTGY…TVPCDHLSIM (243 aa)) is thioesterase (TE) domain.

Pantetheine 4'-phosphate is required as a cofactor.

Its pathway is secondary metabolite biosynthesis. In terms of biological role, non-reducing polyketide synthase; part of the gene cluster that mediates the biosynthesis of polyesters containing 2,4-dihydroxy-6-(2-hydroxypropyl)benzoate and 3-hydroxybutyrate moieties, such as talapolyester G, 15G256beta and 15G256beta-2; as well as to oxidized derivatives such as 15G256alpha. The biosynthesis of the polyesters probably starts with the formation of the diketide 3-hydroxybutyryl-S-ACP catalyzed by the partially reducing polyketide synthase tpeA. The acceptance of 3-hydroxybutyryl by the non-reducing polyketide synthase tpeB would initiate further elongation and cyclization, catalyzed by KS and PT, respectively, to form 2,4-dihydroxy-6-(2-hydroxyn-propyl)benzoyl-S-ACP intermediate. The TE domain could catalyze lactonization at this step to yield 6-hydroxymellein as a derailment product. The polyesterification process maybe occurs when additional molecules of 3-hydroxybutyryl are transferred to tpeB. Following the first esterification step, an intramolecular cyclization catalyzed by the TE domain of tpeB would give talarodioxadione 1, whereas the ethyl esterification of talapolyester G perhaps happens spontaneously. Further oxidation by the cytochrome P450 monooxygenase tpeC then leads to the formation of oxidized derivatives. The protein is Non-reducing polyketide synthase tpeB of Talaromyces stipitatus (strain ATCC 10500 / CBS 375.48 / QM 6759 / NRRL 1006) (Penicillium stipitatum).